A 647-amino-acid chain; its full sequence is Nucleolar GTP-binding protein 1 (647 aa).

Positions 168–340 constitute an OBG-type G domain; the sequence is RTLLICGYPN…VRNKACEKLL (173 aa). GTP is bound by residues 174–181, 220–224, and 288–291; these read GYPNVGKS, DTPGI, and NKTD. Ser563 bears the Phosphoserine mark. The tract at residues 594–647 is disordered; the sequence is ADGSMRSKADRMAKMERRERNRHAKQGESDRHNAVSLSKHLFSGKRGVGKTDFR. Residues 598 to 626 show a composition bias toward basic and acidic residues; it reads MRSKADRMAKMERRERNRHAKQGESDRHN.

This sequence belongs to the TRAFAC class OBG-HflX-like GTPase superfamily. OBG GTPase family. NOG subfamily. Associated with nucleolar and cytoplasmic pre-60S particles. Directly interacts with RLP24.

It is found in the nucleus. The protein resides in the nucleolus. Involved in the biogenesis of the 60S ribosomal subunit. The sequence is that of Nucleolar GTP-binding protein 1 (NOG1) from Saccharomyces cerevisiae (strain ATCC 204508 / S288c) (Baker's yeast).